The primary structure comprises 372 residues: MTSIEPTHTGKKVIVGMSGGVDSSVSAYLLMQQGYQVEGLFMKNWEEDDNNEYCAAAEDLKDAQAVCDKLGIKLHTVNFAAEYWDNVFEYFLAEYKAGRTPNPDIMCNKEIKFKAFLEFADEILDADYIAMGHYVRRRDNSDGSTQMLRGVDGNKDQSYFLYTLSHEQVARSLFPVGELEKHEVREIAKEMGLITHDKKDSTGICFIGERKFTEFLGTYLPAQPGNIETPEGEVIGTHQGLMYHTLGQRKGLGIGGMKNSNDDPWYVVDKDLERNVLIVGQGGHHPRLMSTGMTVNQLHWVDRTGPVDGCHIAVKTRYRQQDVPCTLTYTDEHTLRVVFDEPVAAVTPGQSAVFYDGEVCLGGGIIDQLIRG.

ATP is bound by residues Gly16–Ser23 and Met42. An interaction with target base in tRNA region spans residues Asn102–Asp104. Cys107 (nucleophile) is an active-site residue. Cys107 and Cys205 are joined by a disulfide. Residue Gly132 coordinates ATP. Positions Lys155–Gln157 are interaction with tRNA. Cys205 serves as the catalytic Cysteine persulfide intermediate. The segment at Arg317–Tyr318 is interaction with tRNA.

The protein belongs to the MnmA/TRMU family.

It localises to the cytoplasm. It carries out the reaction S-sulfanyl-L-cysteinyl-[protein] + uridine(34) in tRNA + AH2 + ATP = 2-thiouridine(34) in tRNA + L-cysteinyl-[protein] + A + AMP + diphosphate + H(+). Functionally, catalyzes the 2-thiolation of uridine at the wobble position (U34) of tRNA, leading to the formation of s(2)U34. This chain is tRNA-specific 2-thiouridylase MnmA, found in Shewanella baltica (strain OS185).